The chain runs to 435 residues: Histidine--tRNA ligase (435 aa).

It belongs to the class-II aminoacyl-tRNA synthetase family. In terms of assembly, homodimer.

Its subcellular location is the cytoplasm. It carries out the reaction tRNA(His) + L-histidine + ATP = L-histidyl-tRNA(His) + AMP + diphosphate + H(+). This chain is Histidine--tRNA ligase, found in Synechococcus elongatus (strain ATCC 33912 / PCC 7942 / FACHB-805) (Anacystis nidulans R2).